A 341-amino-acid chain; its full sequence is L-threonine 3-dehydrogenase (341 aa).

Cysteine 38 is a Zn(2+) binding site. Residues threonine 40 and histidine 43 each act as charge relay system in the active site. 6 residues coordinate Zn(2+): histidine 63, glutamate 64, cysteine 93, cysteine 96, cysteine 99, and cysteine 107. NAD(+) contacts are provided by residues isoleucine 175, aspartate 195, arginine 200, 262–264, and 286–287; these read LGI and IY.

Belongs to the zinc-containing alcohol dehydrogenase family. In terms of assembly, homotetramer. Requires Zn(2+) as cofactor.

It localises to the cytoplasm. The catalysed reaction is L-threonine + NAD(+) = (2S)-2-amino-3-oxobutanoate + NADH + H(+). It participates in amino-acid degradation; L-threonine degradation via oxydo-reductase pathway; glycine from L-threonine: step 1/2. Catalyzes the NAD(+)-dependent oxidation of L-threonine to 2-amino-3-ketobutyrate. This is L-threonine 3-dehydrogenase from Escherichia coli O157:H7.